Here is a 176-residue protein sequence, read N- to C-terminus: Nucleoside triphosphate/diphosphate phosphatase (176 aa).

Residue Arg-23 is the Proton donor of the active site. Residues Asn-87, Asp-103, Asp-105, Asp-107, Asp-120, and Glu-123 each contribute to the Mg(2+) site.

This sequence belongs to the Ntdp family. It depends on Mg(2+) as a cofactor.

The catalysed reaction is a ribonucleoside 5'-triphosphate + H2O = a ribonucleoside 5'-diphosphate + phosphate + H(+). It catalyses the reaction a ribonucleoside 5'-diphosphate + H2O = a ribonucleoside 5'-phosphate + phosphate + H(+). In terms of biological role, has nucleoside phosphatase activity towards nucleoside triphosphates and nucleoside diphosphates. This Bacillus cereus (strain B4264) protein is Nucleoside triphosphate/diphosphate phosphatase.